We begin with the raw amino-acid sequence, 330 residues long: Methionyl-tRNA formyltransferase (330 aa).

Residue Ser121–Pro124 coordinates (6S)-5,6,7,8-tetrahydrofolate.

Belongs to the Fmt family.

The catalysed reaction is L-methionyl-tRNA(fMet) + (6R)-10-formyltetrahydrofolate = N-formyl-L-methionyl-tRNA(fMet) + (6S)-5,6,7,8-tetrahydrofolate + H(+). Its function is as follows. Attaches a formyl group to the free amino group of methionyl-tRNA(fMet). The formyl group appears to play a dual role in the initiator identity of N-formylmethionyl-tRNA by promoting its recognition by IF2 and preventing the misappropriation of this tRNA by the elongation apparatus. The polypeptide is Methionyl-tRNA formyltransferase (Burkholderia cenocepacia (strain HI2424)).